Reading from the N-terminus, the 736-residue chain is Polyribonucleotide nucleotidyltransferase (736 aa).

Mg(2+)-binding residues include D506 and D512. Positions 573–632 (PRLTTIQVPVDAIGLIIGKGGETIRSITEETGAEINIEDDGTVTIACSSVEGTHAALATI) constitute a KH domain. An S1 motif domain is found at 642 to 717 (GTIYLGKVRD…GKTRFALSMR (76 aa)).

The protein belongs to the polyribonucleotide nucleotidyltransferase family. Mg(2+) serves as cofactor.

The protein resides in the cytoplasm. The enzyme catalyses RNA(n+1) + phosphate = RNA(n) + a ribonucleoside 5'-diphosphate. Involved in mRNA degradation. Catalyzes the phosphorolysis of single-stranded polyribonucleotides processively in the 3'- to 5'-direction. The polypeptide is Polyribonucleotide nucleotidyltransferase (Chlorobium limicola (strain DSM 245 / NBRC 103803 / 6330)).